Reading from the N-terminus, the 138-residue chain is Putative pre-16S rRNA nuclease (138 aa).

It belongs to the YqgF nuclease family.

Its subcellular location is the cytoplasm. Its function is as follows. Could be a nuclease involved in processing of the 5'-end of pre-16S rRNA. The chain is Putative pre-16S rRNA nuclease from Escherichia coli O7:K1 (strain IAI39 / ExPEC).